A 994-amino-acid polypeptide reads, in one-letter code: Myosin IA heavy chain (994 aa).

The Myosin motor domain maps to 12 to 720 (VGVEDLIMLT…PLFLLEDKRN (709 aa)). Residue 105–112 (GESGAGKT) coordinates ATP. The actin-binding stretch occupies residues 574–654 (TFIPTDKKRP…RAGYCYRQTF (81 aa)). 2 consecutive IQ domains span residues 723 to 744 (LNDL…KWYL) and 745 to 774 (RTLA…QSIS). A TH1 domain is found at 782–970 (RNRQSIKLSK…ANSPSFTAKA (189 aa)).

It belongs to the TRAFAC class myosin-kinesin ATPase superfamily. Myosin family. As to quaternary structure, myosin I heavy chain is single-headed. Dimer of a heavy and a light chain. Inability to self-assemble into filaments.

In terms of biological role, actin-based motor protein, possibly involved in a wide range of motile processes, such as cell movement across a surface, and extension and retraction of pseudopodia or lamellipodia. In Dictyostelium discoideum (Social amoeba), this protein is Myosin IA heavy chain (myoA).